We begin with the raw amino-acid sequence, 172 residues long: Nicotinamide-nucleotide adenylyltransferase (172 aa).

Belongs to the archaeal NMN adenylyltransferase family.

It localises to the cytoplasm. It carries out the reaction beta-nicotinamide D-ribonucleotide + ATP + H(+) = diphosphate + NAD(+). It functions in the pathway cofactor biosynthesis; NAD(+) biosynthesis; NAD(+) from nicotinamide D-ribonucleotide: step 1/1. The polypeptide is Nicotinamide-nucleotide adenylyltransferase (Methanococcus aeolicus (strain ATCC BAA-1280 / DSM 17508 / OCM 812 / Nankai-3)).